Reading from the N-terminus, the 366-residue chain is Holliday junction branch migration complex subunit RuvB (366 aa).

The segment at 3–183 is large ATPase domain (RuvB-L); that stretch reads ADGLVSAAAS…FGFTAHLDFY (181 aa). ATP-binding positions include leucine 22, arginine 23, glycine 64, lysine 67, threonine 68, serine 69, 130 to 132, arginine 173, tyrosine 183, and arginine 220; that span reads EDF. Threonine 68 is a binding site for Mg(2+). A small ATPAse domain (RuvB-S) region spans residues 184–254; that stretch reads APDELARVLT…VARAALRIYD (71 aa). Residues 257-366 are head domain (RuvB-H); that stretch reads GLGLDRLDRA…PEDGLHPGGG (110 aa). Residues arginine 312 and arginine 317 each coordinate DNA.

Belongs to the RuvB family. Homohexamer. Forms an RuvA(8)-RuvB(12)-Holliday junction (HJ) complex. HJ DNA is sandwiched between 2 RuvA tetramers; dsDNA enters through RuvA and exits via RuvB. An RuvB hexamer assembles on each DNA strand where it exits the tetramer. Each RuvB hexamer is contacted by two RuvA subunits (via domain III) on 2 adjacent RuvB subunits; this complex drives branch migration. In the full resolvosome a probable DNA-RuvA(4)-RuvB(12)-RuvC(2) complex forms which resolves the HJ.

The protein resides in the cytoplasm. The catalysed reaction is ATP + H2O = ADP + phosphate + H(+). Functionally, the RuvA-RuvB-RuvC complex processes Holliday junction (HJ) DNA during genetic recombination and DNA repair, while the RuvA-RuvB complex plays an important role in the rescue of blocked DNA replication forks via replication fork reversal (RFR). RuvA specifically binds to HJ cruciform DNA, conferring on it an open structure. The RuvB hexamer acts as an ATP-dependent pump, pulling dsDNA into and through the RuvAB complex. RuvB forms 2 homohexamers on either side of HJ DNA bound by 1 or 2 RuvA tetramers; 4 subunits per hexamer contact DNA at a time. Coordinated motions by a converter formed by DNA-disengaged RuvB subunits stimulates ATP hydrolysis and nucleotide exchange. Immobilization of the converter enables RuvB to convert the ATP-contained energy into a lever motion, pulling 2 nucleotides of DNA out of the RuvA tetramer per ATP hydrolyzed, thus driving DNA branch migration. The RuvB motors rotate together with the DNA substrate, which together with the progressing nucleotide cycle form the mechanistic basis for DNA recombination by continuous HJ branch migration. Branch migration allows RuvC to scan DNA until it finds its consensus sequence, where it cleaves and resolves cruciform DNA. The chain is Holliday junction branch migration complex subunit RuvB from Frankia alni (strain DSM 45986 / CECT 9034 / ACN14a).